The sequence spans 344 residues: Methionine import ATP-binding protein MetN 1 (344 aa).

An ABC transporter domain is found at 2–241 (IELRNLSQRF…PHHEVTRALI (240 aa)). An ATP-binding site is contributed by 38–45 (GRSGAGKS).

This sequence belongs to the ABC transporter superfamily. Methionine importer (TC 3.A.1.24) family. The complex is composed of two ATP-binding proteins (MetN), two transmembrane proteins (MetI) and a solute-binding protein (MetQ).

It localises to the cell inner membrane. It carries out the reaction L-methionine(out) + ATP + H2O = L-methionine(in) + ADP + phosphate + H(+). The catalysed reaction is D-methionine(out) + ATP + H2O = D-methionine(in) + ADP + phosphate + H(+). Part of the ABC transporter complex MetNIQ involved in methionine import. Responsible for energy coupling to the transport system. The chain is Methionine import ATP-binding protein MetN 1 from Burkholderia orbicola (strain AU 1054).